Consider the following 753-residue polypeptide: 5-methyltetrahydropteroyltriglutamate--homocysteine methyltransferase (753 aa).

5-methyltetrahydropteroyltri-L-glutamate contacts are provided by residues 17–20 (RELK) and lysine 117. Residues 431–433 (IGS) and glutamate 484 contribute to the L-homocysteine site. Residues 431-433 (IGS) and glutamate 484 contribute to the L-methionine site. 5-methyltetrahydropteroyltri-L-glutamate-binding positions include 515–516 (RC) and tryptophan 561. Aspartate 599 provides a ligand contact to L-homocysteine. Aspartate 599 is a binding site for L-methionine. 5-methyltetrahydropteroyltri-L-glutamate is bound at residue glutamate 605. Zn(2+) contacts are provided by histidine 641, cysteine 643, and glutamate 665. Histidine 694 (proton donor) is an active-site residue. Residue cysteine 726 coordinates Zn(2+).

Belongs to the vitamin-B12 independent methionine synthase family. It depends on Zn(2+) as a cofactor.

The catalysed reaction is 5-methyltetrahydropteroyltri-L-glutamate + L-homocysteine = tetrahydropteroyltri-L-glutamate + L-methionine. It functions in the pathway amino-acid biosynthesis; L-methionine biosynthesis via de novo pathway; L-methionine from L-homocysteine (MetE route): step 1/1. Catalyzes the transfer of a methyl group from 5-methyltetrahydrofolate to homocysteine resulting in methionine formation. The chain is 5-methyltetrahydropteroyltriglutamate--homocysteine methyltransferase from Enterobacter sp. (strain 638).